Here is a 188-residue protein sequence, read N- to C-terminus: GTP cyclohydrolase 1 (188 aa).

Zn(2+) is bound by residues C76, H79, and C148.

It belongs to the GTP cyclohydrolase I family. As to quaternary structure, homomer.

The catalysed reaction is GTP + H2O = 7,8-dihydroneopterin 3'-triphosphate + formate + H(+). The protein operates within cofactor biosynthesis; 7,8-dihydroneopterin triphosphate biosynthesis; 7,8-dihydroneopterin triphosphate from GTP: step 1/1. This Pelotomaculum thermopropionicum (strain DSM 13744 / JCM 10971 / SI) protein is GTP cyclohydrolase 1.